A 177-amino-acid polypeptide reads, in one-letter code: PRELI domain-containing protein 2 (177 aa).

The region spanning 1-175 (MGVTVDVHQV…LLKEQCGSPL (175 aa)) is the PRELI/MSF1 domain.

The polypeptide is PRELI domain-containing protein 2 (Prelid2) (Mus musculus (Mouse)).